The sequence spans 688 residues: MTKDFLFEIGVEEMPAHVVSKSVKQLADRTGKFLKENGLGFKEIKTYSTPRRLTVLVKELDEKQADVDEVKKGPAKKIAQDADGNWTKAAVGFARGQGMSADDIYFEELKGVEYAYVHVQKAGKEAKEILLGLDEVIKAMTFPTKMRWDSQDFEFVRPIHWLVALYGSEVVPVEFLDITAGRKTAGHRFLGDSVVLANADDYVEALRDQYVIVDADERKAMIVSQINDLVNSHNWQIKLDASLLEEVNNLVEYPTVFAGSFDQKYLEIPDEVLITSMKDNQRYFEVYDQEGKLINCFISVRNGNKDHLENVISGNEKVLVARLDDAVFFYDEDRKYPISHFVDRMDSVSFHDKIGSMAEKMTRVRIIGDYLAKRFGLSAEEVADFDRVSGLYKFDLVTQMVGEFAELQGVMGMHYACLAGENENVSVAIKEHYMPTTAEGDLPKTKVGALLSVADKLDTIIAFFGAGMIPSSSNDPYALRRYAYGIVRILLNEDWSLPFDQVVPEIVELLSGKTPAKLPQGAEEDKQLADFIRDRIKQFLQKNNYQYDVIDAVLASSEQDPSQILAAAKVLQQHHDDEAFKPVVESLTRIANILKKAKFSQASPVDPSLFEDRSEQDLYDGVEALANVKDHAELYEAFVALQGVIDRYFDVNMIMAKDEAVKNNRLSQLAAVNDLAKRLGDLSKLVIK.

Belongs to the class-II aminoacyl-tRNA synthetase family. In terms of assembly, tetramer of two alpha and two beta subunits.

It localises to the cytoplasm. The enzyme catalyses tRNA(Gly) + glycine + ATP = glycyl-tRNA(Gly) + AMP + diphosphate. In Lactobacillus delbrueckii subsp. bulgaricus (strain ATCC BAA-365 / Lb-18), this protein is Glycine--tRNA ligase beta subunit.